We begin with the raw amino-acid sequence, 1226 residues long: Polyamine-transporting ATPase 13A3 (1226 aa).

Residues methionine 1–lysine 28 lie on the Cytoplasmic side of the membrane. The stretch at leucine 29 to tryptophan 49 is an intramembrane region. Over methionine 50–lysine 205 the chain is Cytoplasmic. Position 98 is a phosphoserine (serine 98). Residues leucine 206–tryptophan 226 form a helical membrane-spanning segment. At serine 227 to tyrosine 232 the chain is on the lumenal side. A helical transmembrane segment spans residues tyrosine 233–isoleucine 253. At arginine 254–aspartate 409 the chain is on the cytoplasmic side. The chain crosses the membrane as a helical span at residues alanine 410–isoleucine 430. Residues asparagine 431 to aspartate 448 are Lumenal-facing. A helical membrane pass occupies residues isoleucine 449–alanine 469. Residues glutamine 470–lysine 940 are Cytoplasmic-facing. Aspartate 498 acts as the 4-aspartylphosphate intermediate in catalysis. Residues aspartate 498 and threonine 500 each coordinate Mg(2+). ATP contacts are provided by residues aspartate 498–threonine 500, phenylalanine 628, arginine 684, and aspartate 750. Serine 817 is subject to Phosphoserine. The Mg(2+) site is built by aspartate 883 and aspartate 887. An ATP-binding site is contributed by aspartate 883–aspartate 887. Residues phenylalanine 941 to serine 961 traverse the membrane as a helical segment. Position 962 (asparagine 962) is a topological domain, lumenal. The helical transmembrane segment at leucine 963 to methionine 983 threads the bilayer. Residues serine 984–serine 999 lie on the Cytoplasmic side of the membrane. A helical transmembrane segment spans residues glycine 1000–phenylalanine 1020. Residues glutamine 1021–asparagine 1073 lie on the Lumenal side of the membrane. Residues threonine 1074–glycine 1094 form a helical membrane-spanning segment. Residues lysine 1095 to tyrosine 1105 are Cytoplasmic-facing. The helical transmembrane segment at phenylalanine 1106–valine 1126 threads the bilayer. The Lumenal segment spans residues alanine 1127 to arginine 1143. A helical membrane pass occupies residues valine 1144–valine 1164. Topologically, residues aspartate 1165–threonine 1226 are cytoplasmic.

Belongs to the cation transport ATPase (P-type) (TC 3.A.3) family. Type V subfamily. In terms of tissue distribution, broadly expressed.

The protein resides in the recycling endosome membrane. Its subcellular location is the early endosome membrane. The protein localises to the late endosome membrane. The enzyme catalyses putrescine(out) + ATP + H2O = putrescine(in) + ADP + phosphate + H(+). In terms of biological role, ATP-driven pump involved in endocytosis-dependent polyamine transport. Uses ATP as an energy source to transfer polyamine precursor putrescine from the endosomal compartment to the cytosol. This Homo sapiens (Human) protein is Polyamine-transporting ATPase 13A3.